The chain runs to 583 residues: Torsin-1A-interacting protein 1 (583 aa).

Residues 1–339 (MAGERWRAEG…DESSVKIKWW (339 aa)) lie on the Nuclear side of the membrane. The disordered stretch occupies residues 23–208 (APIREGRRRL…PPLRSPRPDA (186 aa)). The residue at position 60 (S60) is a Phosphoserine. 2 stretches are compositionally biased toward basic and acidic residues: residues 70–101 (FEPRAAKERSPGERRTPPEKFRSDSAKEEVRE) and 115–132 (GPQEAEEMKTRRSTRLEQ). S134, S142, S155, and S157 each carry phosphoserine. Residues 166 to 188 (SSQPVTSQTVSKKTVRTPETSVM) are compositionally biased toward polar residues. S189 is modified (phosphoserine). Phosphothreonine is present on T222. 3 positions are modified to phosphoserine: S228, S231, and S242. A Glycyl lysine isopeptide (Lys-Gly) (interchain with G-Cter in SUMO2) cross-link involves residue K309. At S316 the chain carries Phosphoserine. The helical transmembrane segment at 340-360 (LLILVAALAMGIYWFFHTPVV) threads the bilayer. An interaction with TOR1A region spans residues 356-583 (HTPVVETTAV…ENALKAGSCL (228 aa)). Residues 360–388 (VETTAVQEFQNQMKQLQSKYQSQDEKLWK) are a coiled coil. At 361 to 583 (ETTAVQEFQN…ENALKAGSCL (223 aa)) the chain is on the perinuclear space side. N399 carries N-linked (GlcNAc...) asparagine glycosylation.

It belongs to the TOR1AIP family. Interacts with ATP1B4. Interacts with TOR1A (ATP-bound). Interacts with TOR1B, TOR2A and TOR3A. Interacts with VIM.

It is found in the nucleus inner membrane. Functionally, required for nuclear membrane integrity. Induces TOR1A and TOR1B ATPase activity and is required for their location on the nuclear membrane. Binds to A- and B-type lamins. Possible role in membrane attachment and assembly of the nuclear lamina. This is Torsin-1A-interacting protein 1 (Tor1aip1) from Rattus norvegicus (Rat).